Consider the following 291-residue polypeptide: Membrane protein insertase YidC (291 aa).

The first 19 residues, 1 to 19, serve as a signal peptide directing secretion; sequence MKKKALLPLLLGVMVFLAG. Cys20 carries N-palmitoyl cysteine lipidation. Cys20 is lipidated: S-diacylglycerol cysteine. Transmembrane regions (helical) follow at residues 56–76, 134–154, 170–190, and 211–231; these read YGIA…PFML, ALGC…YFVL, WFNL…LYFI, and MIVS…ALGL. Residues 266–291 are disordered; that stretch reads FKENNSNSNKKGKNTQVVSKNNKKKK.

This sequence belongs to the OXA1/ALB3/YidC family. Type 2 subfamily.

The protein localises to the cell membrane. Required for the insertion and/or proper folding and/or complex formation of integral membrane proteins into the membrane. Involved in integration of membrane proteins that insert both dependently and independently of the Sec translocase complex, as well as at least some lipoproteins. This chain is Membrane protein insertase YidC, found in Staphylococcus haemolyticus (strain JCSC1435).